A 64-amino-acid polypeptide reads, in one-letter code: Alpha-mammal toxin AnCra1 (64 aa).

Residues 2–64 (KDGYIVDDVN…VRTKGPGRCN (63 aa)) enclose the LCN-type CS-alpha/beta domain. Cystine bridges form between cysteine 12–cysteine 63, cysteine 16–cysteine 36, cysteine 22–cysteine 46, and cysteine 26–cysteine 48.

The protein belongs to the long (4 C-C) scorpion toxin superfamily. Sodium channel inhibitor family. Alpha subfamily. As to expression, expressed by the venom gland.

Its subcellular location is the secreted. Its function is as follows. Alpha toxins bind voltage-independently at site-3 of sodium channels (Nav) and inhibit the inactivation of the activated channels, thereby blocking neuronal transmission. This toxin is active against mammals. The recombinant toxin selectively inhibits the fast inactivation of hNav1.7/SCN9A channel (EC(50)=136.7 nM). Is potent in inhibiting the fast inactivation of hNav1.7 and has little effect on the steady-state inactivation. In vivo, intravenous injection into mice induces muscle contraction, leading to severe paralysis and death. This chain is Alpha-mammal toxin AnCra1, found in Androctonus crassicauda (Arabian fat-tailed scorpion).